Reading from the N-terminus, the 488-residue chain is UDP-N-acetylmuramoyl-L-alanyl-D-glutamate--2,6-diaminopimelate ligase (488 aa).

UDP-N-acetyl-alpha-D-muramoyl-L-alanyl-D-glutamate contacts are provided by residues Leu24, Ser26, and 41 to 43 (HQV). 113–119 (GTNGKTT) contacts ATP. Residues Asn154, 155-156 (TT), Ser182, Gln188, and Arg190 contribute to the UDP-N-acetyl-alpha-D-muramoyl-L-alanyl-D-glutamate site. Lys222 carries the post-translational modification N6-carboxylysine. Residues Arg386, 410–413 (DNPR), Gly461, and Glu465 each bind meso-2,6-diaminopimelate. A Meso-diaminopimelate recognition motif motif is present at residues 410-413 (DNPR).

This sequence belongs to the MurCDEF family. MurE subfamily. It depends on Mg(2+) as a cofactor. Post-translationally, carboxylation is probably crucial for Mg(2+) binding and, consequently, for the gamma-phosphate positioning of ATP.

It is found in the cytoplasm. The catalysed reaction is UDP-N-acetyl-alpha-D-muramoyl-L-alanyl-D-glutamate + meso-2,6-diaminopimelate + ATP = UDP-N-acetyl-alpha-D-muramoyl-L-alanyl-gamma-D-glutamyl-meso-2,6-diaminopimelate + ADP + phosphate + H(+). It participates in cell wall biogenesis; peptidoglycan biosynthesis. Its function is as follows. Catalyzes the addition of meso-diaminopimelic acid to the nucleotide precursor UDP-N-acetylmuramoyl-L-alanyl-D-glutamate (UMAG) in the biosynthesis of bacterial cell-wall peptidoglycan. This Haemophilus influenzae (strain PittGG) protein is UDP-N-acetylmuramoyl-L-alanyl-D-glutamate--2,6-diaminopimelate ligase.